The chain runs to 481 residues: Beta-amyrin 28-monooxygenase (481 aa).

Residues 4–24 (FYVPLLSLFVLFISLSFHFLF) traverse the membrane as a helical segment. Cys-428 serves as a coordination point for heme.

The protein belongs to the cytochrome P450 family. It depends on heme as a cofactor. As to expression, mostly expressed in roots, and, to a lower extent, in stems and leaves. Accumulates only in the rhizome of plants.

Its subcellular location is the membrane. It catalyses the reaction beta-amyrin + 3 reduced [NADPH--hemoprotein reductase] + 3 O2 = oleanolate + 3 oxidized [NADPH--hemoprotein reductase] + 4 H2O + 4 H(+). It participates in secondary metabolite biosynthesis; terpenoid biosynthesis. In terms of biological role, component of the oleanane-type triterpene saponins (e.g. ginsenosides or panaxosides) biosynthetic pathway. Catalyzes the carboxylation of beta-amyrin at the C-28 position to form oleanolic acid during ginsenoside biosynthesis, a class of tetracyclic triterpenoid saponins. In Panax ginseng (Korean ginseng), this protein is Beta-amyrin 28-monooxygenase.